We begin with the raw amino-acid sequence, 208 residues long: V-type ATP synthase subunit D (208 aa).

The protein belongs to the V-ATPase D subunit family.

Functionally, produces ATP from ADP in the presence of a proton gradient across the membrane. This is V-type ATP synthase subunit D from Streptococcus pyogenes serotype M1.